A 196-amino-acid polypeptide reads, in one-letter code: Ribosome maturation factor RimP (196 aa).

Positions 164–196 (LAPQKPNKPGPKKTGHEKKKPSNESAAGKPRAE) are disordered. Residues 173-182 (GPKKTGHEKK) show a composition bias toward basic residues.

It belongs to the RimP family.

The protein localises to the cytoplasm. Required for maturation of 30S ribosomal subunits. The chain is Ribosome maturation factor RimP from Xanthomonas oryzae pv. oryzae (strain MAFF 311018).